The chain runs to 478 residues: Allene oxide synthase 2 (478 aa).

Residues K88, H119, and K123 each contribute to the heme b site. N278 contacts (13S)-hydroperoxy-(9Z,11E,15Z)-octadecatrienoate. Residues K427 and C429 each contribute to the heme b site.

Belongs to the cytochrome P450 family. Heme b is required as a cofactor. In terms of tissue distribution, weakly expressed in roots, shoots, leaves and flowers.

It carries out the reaction (13S)-hydroperoxy-(9Z,11E,15Z)-octadecatrienoate = (9Z,13S,15Z)-12,13-epoxyoctadeca-9,11,15-trienoate + H2O. The protein operates within lipid metabolism; oxylipin biosynthesis. Its function is as follows. Involved in the biosynthesis of jasmonic acid, a growth regulator that is implicated also as a signaling molecule in plant defense. Converts 13-hydroperoxylinolenic acid to 12,13-epoxylinolenic acid. This chain is Allene oxide synthase 2 (CYP74A2), found in Oryza sativa subsp. japonica (Rice).